A 1073-amino-acid chain; its full sequence is Receptor-type guanylate cyclase gcy-23 (1073 aa).

The signal sequence occupies residues 1 to 15 (MRRELFIFLLLLGEC). Topologically, residues 16-458 (ANVKVKVGHI…FRNEKCDYTT (443 aa)) are extracellular. The N-linked (GlcNAc...) asparagine glycan is linked to N336. The chain crosses the membrane as a helical span at residues 459 to 479 (LIIGGCIVLLIILLIICFFIL). Residues 480-1073 (SRVCENRALA…QQQNFSQLGI (594 aa)) lie on the Cytoplasmic side of the membrane. Residues 508-808 (MKSMLSIGSS…RVRLNTENYL (301 aa)) enclose the Protein kinase domain. Positions 813-844 (SLVDQMMRMMEQYANNLEKLVAERTGMLEEAN) form a coiled coil. The Guanylate cyclase domain occupies 878 to 1008 (TVMFSDIVGF…DTVNVASRME (131 aa)). D883, I884, and D927 together coordinate Mg(2+).

The protein belongs to the adenylyl cyclase class-4/guanylyl cyclase family. In terms of tissue distribution, expressed specifically in AFD sensory neurons.

It localises to the cell membrane. The protein localises to the cell projection. It is found in the cilium. It carries out the reaction GTP = 3',5'-cyclic GMP + diphosphate. In terms of biological role, guanylate cyclase involved in the production of the second messenger cGMP. Regulates thermotaxis responses in AFD sensory neurons. May regulate AFD neuronal activity such as calcium responses to temperature gradients. The polypeptide is Receptor-type guanylate cyclase gcy-23 (Caenorhabditis elegans).